The chain runs to 340 residues: UDP-glucose 4-epimerase (340 aa).

NAD(+)-binding positions include Phe12–Ile13, Asp32–Ser37, Asp59–Val60, Phe81–Lys85, Asn100, Ser125, Tyr150, Lys154, and Phe179. Substrate contacts are provided by Ser125 and Tyr150. Tyr150 serves as the catalytic Proton acceptor. Substrate contacts are provided by residues Asn180, Asn200–Leu201, Gln217–Tyr219, Arg232, and Arg292–Asp295.

Belongs to the NAD(P)-dependent epimerase/dehydratase family. As to quaternary structure, homodimer. Requires NAD(+) as cofactor.

The enzyme catalyses UDP-alpha-D-glucose = UDP-alpha-D-galactose. It functions in the pathway carbohydrate metabolism; galactose metabolism. In terms of biological role, involved in the metabolism of galactose. Catalyzes the conversion of UDP-galactose (UDP-Gal) to UDP-glucose (UDP-Glc) through a mechanism involving the transient reduction of NAD. Can also epimerize UDP-GalNAc to UDP-GlcNAc. Involved in the lacto-N-biose I/galacto-N-biose (LNB/GNB) degradation pathway, which is important for host intestinal colonization by bifidobacteria. The chain is UDP-glucose 4-epimerase (lnpD) from Bifidobacterium longum subsp. longum (strain ATCC 15707 / DSM 20219 / JCM 1217 / NCTC 11818 / E194b).